A 135-amino-acid polypeptide reads, in one-letter code: Transcriptional activator protein (135 aa).

Positions 17–32 (KVTHRQVKKRAIRRRR) match the Nuclear localization signal motif. A zinc finger lies at 37-54 (CGCSYYLHINCFNHGFTH). The segment covering 77 to 88 (VFHNHQAPTTTI) has biased composition (polar residues). Residues 77 to 117 (VFHNHQAPTTTIPAEPGHHNSPGSIQSQPEEGAGDSQMFSQ) are disordered. The segment at 120–135 (DLDNLTASDWSFLKGL) is transactivation.

It belongs to the geminiviridae transcriptional activator protein family. Monomer. Homodimer. Homooligomer. Self-interaction correlates with nuclear localization and efficient activation of transcription. Monomers suppress local silencing by interacting with and inactivating host adenosine kinase 2 (ADK2) in the cytoplasm. Interacts with and inhibits host SNF1 kinase. Binds to ssDNA. Phosphorylated.

It localises to the host nucleus. It is found in the host cytoplasm. In terms of biological role, strong activator of the late viral genes promoters. Enhances the expression of the capsid protein and nuclear shuttle protein. Acts as a suppressor of RNA-mediated gene silencing, also known as post-transcriptional gene silencing (PTGS), a mechanism of plant viral defense that limits the accumulation of viral RNAs. Suppresses the host RNA silencing by inhibiting adenosine kinase 2 (ADK2), a kinase involved in a general methylation pathway. Also suppresses the host basal defense by interacting with and inhibiting SNF1 kinase, a key regulator of cell metabolism implicated in innate antiviral defense. Determines pathogenicity. This Hewittia sublobata (Coralbush) protein is Transcriptional activator protein.